Reading from the N-terminus, the 202-residue chain is UPF0301 protein Meso_0753 (202 aa).

This sequence belongs to the UPF0301 (AlgH) family.

In Chelativorans sp. (strain BNC1), this protein is UPF0301 protein Meso_0753.